Here is a 663-residue protein sequence, read N- to C-terminus: UvrABC system protein B (663 aa).

Basic and acidic residues predominate over residues 1–10; sequence MIDKRDDKPF. The interval 1–23 is disordered; the sequence is MIDKRDDKPFKLKSKYKPSGDQP. One can recognise a Helicase ATP-binding domain in the interval 31–271; sequence DNIEGGEKAQ…EQSIAKIQAE (241 aa). Residue 44-51 coordinates ATP; it reads GATGTGKT. Positions 97 to 120 match the Beta-hairpin motif; that stretch reads YYDYYQPEAYVPSSDTYIEKDSSV. The 167-residue stretch at 435-601 folds into the Helicase C-terminal domain; the sequence is QIDDLLGEIN…TIKKDIRGLI (167 aa). Residues 627 to 662 enclose the UVR domain; it reads KEAINALQKQMQEAAELLDFELAAQMRDLILELKLM.

Belongs to the UvrB family. In terms of assembly, forms a heterotetramer with UvrA during the search for lesions. Interacts with UvrC in an incision complex.

It localises to the cytoplasm. Functionally, the UvrABC repair system catalyzes the recognition and processing of DNA lesions. A damage recognition complex composed of 2 UvrA and 2 UvrB subunits scans DNA for abnormalities. Upon binding of the UvrA(2)B(2) complex to a putative damaged site, the DNA wraps around one UvrB monomer. DNA wrap is dependent on ATP binding by UvrB and probably causes local melting of the DNA helix, facilitating insertion of UvrB beta-hairpin between the DNA strands. Then UvrB probes one DNA strand for the presence of a lesion. If a lesion is found the UvrA subunits dissociate and the UvrB-DNA preincision complex is formed. This complex is subsequently bound by UvrC and the second UvrB is released. If no lesion is found, the DNA wraps around the other UvrB subunit that will check the other stand for damage. This Streptococcus pyogenes serotype M5 (strain Manfredo) protein is UvrABC system protein B.